A 691-amino-acid polypeptide reads, in one-letter code: DNA ligase (691 aa).

The segment at 1–22 is disordered; that stretch reads MTTAEDVAGNPYISDPRTDFES. Residues 59–63, 107–108, and Glu-137 contribute to the NAD(+) site; these read DRAYD and SI. The N6-AMP-lysine intermediate role is filled by Lys-139. NAD(+)-binding residues include Arg-160, Glu-196, Lys-311, and Lys-335. Zn(2+)-binding residues include Cys-426, Cys-429, Cys-442, and Cys-448. A BRCT domain is found at 608 to 691; sequence TDGDALDGQT…EELLDDAGVL (84 aa). The segment at 637–667 is disordered; the sequence is ERNDGSATSSVSGNTDYLVLGDNPGQRKQDD. Residues 641 to 651 show a composition bias toward polar residues; it reads GSATSSVSGNT.

This sequence belongs to the NAD-dependent DNA ligase family. LigA subfamily. Mg(2+) is required as a cofactor. Mn(2+) serves as cofactor.

The enzyme catalyses NAD(+) + (deoxyribonucleotide)n-3'-hydroxyl + 5'-phospho-(deoxyribonucleotide)m = (deoxyribonucleotide)n+m + AMP + beta-nicotinamide D-nucleotide.. In terms of biological role, DNA ligase that catalyzes the formation of phosphodiester linkages between 5'-phosphoryl and 3'-hydroxyl groups in double-stranded DNA using NAD as a coenzyme and as the energy source for the reaction. It is essential for DNA replication and repair of damaged DNA. The protein is DNA ligase of Haloarcula marismortui (strain ATCC 43049 / DSM 3752 / JCM 8966 / VKM B-1809) (Halobacterium marismortui).